Consider the following 130-residue polypeptide: Fluoride-specific ion channel FluC (130 aa).

A run of 4 helical transmembrane segments spans residues 2–22, 36–56, 71–91, and 100–120; these read GLLL…RFAL, GILL…AFLI, FLLV…SLDI, and IFIA…AVIL. Positions 79 and 82 each coordinate Na(+).

Belongs to the fluoride channel Fluc/FEX (TC 1.A.43) family.

The protein localises to the cell inner membrane. The enzyme catalyses fluoride(in) = fluoride(out). Its activity is regulated as follows. Na(+) is not transported, but it plays an essential structural role and its presence is essential for fluoride channel function. Its function is as follows. Fluoride-specific ion channel. Important for reducing fluoride concentration in the cell, thus reducing its toxicity. The chain is Fluoride-specific ion channel FluC from Francisella tularensis subsp. mediasiatica (strain FSC147).